We begin with the raw amino-acid sequence, 285 residues long: ATP phosphoribosyltransferase (285 aa).

Belongs to the ATP phosphoribosyltransferase family. Long subfamily. Mg(2+) is required as a cofactor.

Its subcellular location is the cytoplasm. The catalysed reaction is 1-(5-phospho-beta-D-ribosyl)-ATP + diphosphate = 5-phospho-alpha-D-ribose 1-diphosphate + ATP. It functions in the pathway amino-acid biosynthesis; L-histidine biosynthesis; L-histidine from 5-phospho-alpha-D-ribose 1-diphosphate: step 1/9. Feedback inhibited by histidine. Functionally, catalyzes the condensation of ATP and 5-phosphoribose 1-diphosphate to form N'-(5'-phosphoribosyl)-ATP (PR-ATP). Has a crucial role in the pathway because the rate of histidine biosynthesis seems to be controlled primarily by regulation of HisG enzymatic activity. This Methanocella arvoryzae (strain DSM 22066 / NBRC 105507 / MRE50) protein is ATP phosphoribosyltransferase.